Reading from the N-terminus, the 67-residue chain is Lantibiotic Flvbeta.b (67 aa).

The propeptide at 1-34 (MDNNTKLQKLYEQLAATGSEKELDAMLDENMAGA) is cleaved by FlvT. Ser36 bears the 2,3-didehydroalanine (Ser); by FlvM2 mark. 2,3-didehydrobutyrine; by FlvM2 is present on residues Thr39 and Thr43. Cross-links (beta-methyllanthionine (Thr-Cys); by FlvM2) lie at residues 50–56 (TTGFDWC), 58–61 (TGAC), and 62–65 (TYSC).

Post-translationally, contains DL-beta-methyllanthionine, when coepressed in E.coli with the flavecin synthetase FlvM2.

Its subcellular location is the secreted. Lanthionine-containing peptide antibiotic (lantibiotic) only active on Gram-positive bacteria in synergy with Flvalpha.a. Is not active in absence of Flvalpha.a, which is encoded by the same operon than Flvbeta.b. The bactericidal activity of lantibiotics is based on depolarization of energized bacterial cytoplasmic membranes, initiated by the formation of aqueous transmembrane pores. This Ruminococcus flavefaciens protein is Lantibiotic Flvbeta.b.